The following is a 610-amino-acid chain: MDLHQKIRTLPTSPGVYLYKNAEGEIIYVGKAKNLRSRVGSYFVRGADENSKTGSLLREAVDVEYIVVDNEKEALALENNLIKQKKPRFNILLRDDKTYPYIKLTMGEKWPRVYVTRRLKKDGSEYYGPFFPANLAYRVVDLIHRNFLVPSCYIDLRRYHPRPCLQHYIGRCLGPCVEGLTNEVQYGEAVKDVKLFLEGRHSDLKQSLTARMNKAAEGMQFELAAKYRDLITTVEDLHQKQRIAAAEGDDADVFGYHYENHMVAVNLFHMRGGKVLDRRDFFFEDLGEMEATGGLNTGEFFSTLLQQIYLDNKYVPRTIYVPVEFEDREALCEILSEQMHRKIDINVPQRGDKRSLIDLVAQNAKQSYDQRFRVMRPQTDVLKSVLQDTLELPELPNRIECFDISHIQGAETVASMVVWEDGKMKKSDYRKFIIKTVQGVDDFASMREVVTRRYKRIVEENQPMPSLVLIDGGVGQLHAAAGALEAIGITNQPLASIAKREEIIYVHGREDEPIRIDHHSPVLHIIQLIRDEAHRFAITFHRKRREIRDRSNELLEIPGIGEQAMKRLLRHFGSIQSIRTANATSLEAVVNRTQAEAILAHFRAEETTRS.

The region spanning 12–91 (TSPGVYLYKN…IKQKKPRFNI (80 aa)) is the GIY-YIG domain. The UVR domain occupies 202-237 (SDLKQSLTARMNKAAEGMQFELAAKYRDLITTVEDL).

It belongs to the UvrC family. In terms of assembly, interacts with UvrB in an incision complex.

It localises to the cytoplasm. The UvrABC repair system catalyzes the recognition and processing of DNA lesions. UvrC both incises the 5' and 3' sides of the lesion. The N-terminal half is responsible for the 3' incision and the C-terminal half is responsible for the 5' incision. The polypeptide is UvrABC system protein C (Koribacter versatilis (strain Ellin345)).